The sequence spans 170 residues: Fluoride-specific ion channel FluC 2 (170 aa).

The next 4 membrane-spanning stretches (helical) occupy residues 8–28 (ALVF…TVWI), 55–75 (IALL…VGMI), 84–104 (TFWG…AAAV), and 114–134 (ILIG…AAAM). G92 and T95 together coordinate Na(+).

The protein belongs to the fluoride channel Fluc/FEX (TC 1.A.43) family.

The protein resides in the cell membrane. It catalyses the reaction fluoride(in) = fluoride(out). With respect to regulation, na(+) is not transported, but it plays an essential structural role and its presence is essential for fluoride channel function. In terms of biological role, fluoride-specific ion channel. Important for reducing fluoride concentration in the cell, thus reducing its toxicity. The protein is Fluoride-specific ion channel FluC 2 of Corynebacterium jeikeium (strain K411).